Here is a 97-residue protein sequence, read N- to C-terminus: MIKKDRFTNEKLNKLFDSPFSLVNYAIKQAKIKIAKGDVRSSNVAIETLVLLDREGIQPEFTEEIVVTASPTVERKRSEHTNSRKKDPSAYTWSDVK.

Positions 72–97 are disordered; sequence TVERKRSEHTNSRKKDPSAYTWSDVK. Over residues 73–88 the composition is skewed to basic and acidic residues; that stretch reads VERKRSEHTNSRKKDP.

It belongs to the chlamydial CPn_0121/CT_031/TC_0300 family.

This is an uncharacterized protein from Chlamydia pneumoniae (Chlamydophila pneumoniae).